We begin with the raw amino-acid sequence, 369 residues long: Transforming protein Maf (369 aa).

Disordered regions lie at residues 57–85 (STPM…TDQK) and 169–243 (GGAP…GLHF). A compositionally biased stretch (basic residues) spans 173-183 (HYHHHHHHPHH). The segment covering 184 to 193 (GGGGGGGGHP) has biased composition (gly residues). Positions 194-211 (HGAAPGSAPPSSASSSAA) are enriched in low complexity. Residues 212–226 (GSGGGGGGGGGGAGG) are compositionally biased toward gly residues. A basic motif region spans residues 274-299 (RLKQKRRTLKNRGYAQSCRFKRVQQR). The bZIP domain maps to 274–337 (RLKQKRRTLK…DAYKEKYEKL (64 aa)). Residues 302 to 323 (LESEKNQLLQQVEHLKQEISRL) form a leucine-zipper region. The tract at residues 341–369 (GFRENGSSSDNPSSPEFFMYPRESSTTVM) is disordered. Residues 345 to 354 (NGSSSDNPSS) show a composition bias toward polar residues.

This sequence belongs to the bZIP family. Maf subfamily.

The protein resides in the host nucleus. Functionally, might be a transcriptional trans-activator. The protein is Transforming protein Maf (V-MAF) of Galliformes.